Consider the following 316-residue polypeptide: MCISISQVSRLRIHSFGSSCCERVHGWIKNSSSLKLLDVRASSVDGKARWIRRNVSTTTQGSRSNTKSSVLGGTVPVTRIIDEESRTKVQPFGNLQQRLAQDKDLSKLLTVIVSDLETTGLHRKNERIIEIAAQDIAGGGYSTFQTLVNPGVVPITNAHIHGIRNDMVCRPEVPRMEELIPIFLRYVESRQKPGGYVMLVAHNGKSFDFQFLINEFNRCSYEIPHNWLLLDSLPLARENMKSVEPTVKLSSSLEALADYYSLTREGDAHRALSDVLLLSKVFQKLTIDLKLSLSDLVLRCHTASDISAAMAKNKKA.

Residues 1 to 63 (MCISISQVSR…NVSTTTQGSR (63 aa)) constitute a chloroplast and mitochondrion transit peptide. In terms of domain architecture, Exonuclease spans 112 to 282 (IVSDLETTGL…SDVLLLSKVF (171 aa)). D115 and E117 together coordinate Mg(2+). H269 (proton donor/acceptor) is an active-site residue. D274 lines the Mg(2+) pocket.

Belongs to the exonuclease superfamily. TREX family. Mg(2+) serves as cofactor. In terms of tissue distribution, highly expressed in mature pollen grains. Detected in flowers, senescing leaves and roots.

The protein resides in the plastid. Its subcellular location is the chloroplast. The protein localises to the mitochondrion. With respect to regulation, inhibited by free nucleotide diphosphates (NDPs). Exonuclease required for organelle DNA degradation during pollen development. Plays non-essential roles in maternal inheritance. May be part of the DNA salvage machinery. The chain is Exonuclease DPD1, chloroplastic/mitochondrial from Arabidopsis thaliana (Mouse-ear cress).